We begin with the raw amino-acid sequence, 398 residues long: Lipase member K (398 aa).

Residues 1–19 form the signal peptide; sequence MWWLLATTCCVLLSGPIDG. Positions 78–377 constitute an AB hydrolase-1 domain; that stretch reads VVYLQHGLIA…HYNHMDFYLG (300 aa). Ser-171 serves as the catalytic Nucleophile. Cys-245 and Cys-254 are oxidised to a cystine. Asn-270 and Asn-326 each carry an N-linked (GlcNAc...) asparagine glycan. Residues Asp-342 and His-371 each act as charge relay system in the active site.

This sequence belongs to the AB hydrolase superfamily. Lipase family.

Its subcellular location is the secreted. Functionally, plays a highly specific role in the last step of keratinocyte differentiation. May have an essential function in lipid metabolism of the most differentiated epidermal layers. The polypeptide is Lipase member K (Lipk) (Mus musculus (Mouse)).